The primary structure comprises 988 residues: DNA-binding protein SMUBP-2 (988 aa).

Ala-2 carries the N-acetylalanine modification. ATP is bound by residues 213 to 220 (GPPGTGKT), Gln-402, Tyr-441, and Glu-570. The SS DNA-binding stretch occupies residues 637 to 783 (TAFEYLDDIV…KARHITVSRR (147 aa)). 3 disordered regions span residues 651–722 (THEG…GGTD), 765–820 (LKHD…PHGS), and 835–872 (RQQG…ALPS). The segment covering 702–718 (SQVQPQHSSKANGSDRT) has biased composition (polar residues). The 64-residue stretch at 721–784 (TDRTEHFRAM…ARHITVSRRS (64 aa)) folds into the R3H domain. The segment covering 765-775 (LKHDSTGEGKA) has biased composition (basic and acidic residues). 2 positions are modified to phosphoserine: Ser-797 and Ser-800. Residues 802–817 (AQAEPEPQVEQPVGQP) show a composition bias toward low complexity. Over residues 835–844 (RQQGCQAQSQ) the composition is skewed to polar residues. Residues 857-861 (KKKKK) carry the Nuclear localization signal motif. Residues 884–933 (VKADNTCSFTKCSASTTTLGQFCMHCSRRYCLSHHLPEIHGCGEKARAHA) form an AN1-type zinc finger. Cys-890, Cys-895, Cys-906, Cys-909, Cys-914, His-917, His-923, and Cys-925 together coordinate Zn(2+). A disordered region spans residues 943-988 (LYAGSGTKDRALDPAKRAQLQRKLDKKLGELSSQRTSKKKEKERGT). The segment covering 949–971 (TKDRALDPAKRAQLQRKLDKKLG) has biased composition (basic and acidic residues). A coiled-coil region spans residues 957–986 (AKRAQLQRKLDKKLGELSSQRTSKKKEKER).

The protein belongs to the DNA2/NAM7 helicase family. In terms of assembly, homooligomer. Interacts with RUVBL1. Interacts with RUVBL2. Interacts with GTF3C1. Interacts with ABT1. Interacts with ribosomes. In terms of tissue distribution, expressed in liver, skin, muscle, heart, brain, spleen and kidney.

The protein localises to the nucleus. Its subcellular location is the cytoplasm. It is found in the cell projection. The protein resides in the axon. It carries out the reaction ATP + H2O = ADP + phosphate + H(+). In terms of biological role, 5' to 3' helicase that unwinds RNA and DNA duplexes in an ATP-dependent reaction. Specific to 5'-phosphorylated single-stranded guanine-rich sequences. May play a role in RNA metabolism, ribosome biogenesis or initiation of translation. May play a role in regulation of transcription. Interacts with tRNA-Tyr. This is DNA-binding protein SMUBP-2 (Ighmbp2) from Rattus norvegicus (Rat).